We begin with the raw amino-acid sequence, 133 residues long: Cytochrome c-554 (133 aa).

A Pyrrolidone carboxylic acid modification is found at Gln1. 4 residues coordinate heme c: Met17, Cys122, Cys125, and His126.

Binds 1 heme c group covalently per subunit.

It is found in the periplasm. Functionally, monoheme c-type cytochrome, that is particularly expressed when cells generate energy via aerobic respiration. The polypeptide is Cytochrome c-554 (cycF) (Cereibacter sphaeroides (Rhodobacter sphaeroides)).